The sequence spans 268 residues: Bis(5'-nucleosyl)-tetraphosphatase, symmetrical (268 aa).

This sequence belongs to the Ap4A hydrolase family.

It catalyses the reaction P(1),P(4)-bis(5'-adenosyl) tetraphosphate + H2O = 2 ADP + 2 H(+). Functionally, hydrolyzes diadenosine 5',5'''-P1,P4-tetraphosphate to yield ADP. This is Bis(5'-nucleosyl)-tetraphosphatase, symmetrical from Vibrio parahaemolyticus serotype O3:K6 (strain RIMD 2210633).